The sequence spans 143 residues: Putative pre-16S rRNA nuclease (143 aa).

The protein belongs to the YqgF nuclease family.

The protein resides in the cytoplasm. In terms of biological role, could be a nuclease involved in processing of the 5'-end of pre-16S rRNA. This Crocosphaera subtropica (strain ATCC 51142 / BH68) (Cyanothece sp. (strain ATCC 51142)) protein is Putative pre-16S rRNA nuclease.